The primary structure comprises 211 residues: SsrA-binding protein (211 aa).

The tract at residues 168 to 211 (KHRLRRPRAQRNTQRSVTPRRTRENKNVRGSKARSARRNVRREN) is disordered. Polar residues predominate over residues 177–186 (QRNTQRSVTP). The segment covering 196–211 (RGSKARSARRNVRREN) has biased composition (basic residues).

Belongs to the SmpB family.

It is found in the cytoplasm. Required for rescue of stalled ribosomes mediated by trans-translation. Binds to transfer-messenger RNA (tmRNA), required for stable association of tmRNA with ribosomes. tmRNA and SmpB together mimic tRNA shape, replacing the anticodon stem-loop with SmpB. tmRNA is encoded by the ssrA gene; the 2 termini fold to resemble tRNA(Ala) and it encodes a 'tag peptide', a short internal open reading frame. During trans-translation Ala-aminoacylated tmRNA acts like a tRNA, entering the A-site of stalled ribosomes, displacing the stalled mRNA. The ribosome then switches to translate the ORF on the tmRNA; the nascent peptide is terminated with the 'tag peptide' encoded by the tmRNA and targeted for degradation. The ribosome is freed to recommence translation, which seems to be the essential function of trans-translation. The protein is SsrA-binding protein of Tropheryma whipplei (strain Twist) (Whipple's bacillus).